A 92-amino-acid polypeptide reads, in one-letter code: Movement protein (92 aa).

The chain crosses the membrane as a helical span at residues 38-58 (VIALVVILVSVGVFYLAYTLF).

Belongs to the mastrevirus movement protein family. As to quaternary structure, interacts with the capsid protein (CP). Part of a MP-CP-viral DNA complex.

It is found in the host membrane. In terms of biological role, involved in the viral transport within, and between cells. In Phaseolus vulgaris (Kidney bean), this protein is Movement protein.